The primary structure comprises 280 residues: Mesaconyl-C(4)-CoA hydratase (280 aa).

Belongs to the HTD2 family. As to quaternary structure, homodimer.

The enzyme catalyses (3S)-citramalyl-CoA = 3-methylfumaryl-CoA + H2O. Its activity is regulated as follows. Inhibited by 3-methylfumaryl-CoA concentrations above 0.3 mM. In terms of biological role, involved in the glyoxylate assimilation cycle used to regenerate acetyl-CoA and produce pyruvate as universal precursor for biosynthesis. Catalyzes the hydration of 3-methylfumaryl-CoA (mesaconyl-C4-CoA) to (3S)-citramalyl-CoA. This chain is Mesaconyl-C(4)-CoA hydratase (meh), found in Chloroflexus aurantiacus (strain ATCC 29366 / DSM 635 / J-10-fl).